The sequence spans 162 residues: MFFENSAILLCALLSIAVGYTKSPFMSLMYSVMLFINSSFVLMMLGFEFLALVNLLVYVGALAVLFLFVIMLLEIPATELRAYSRGWSTLGIFVFIINGVFQITPSMGPRGIITGLPGAESITNLGHALYLYFADLLILNSLVLTVALFGRFAIAPVRTTGR.

5 helical membrane-spanning segments follow: residues 1–21 (MFFE…VGYT), 32–52 (VMLF…FLAL), 55–75 (LLVY…LLEI), 87–107 (WSTL…TPSM), and 129–149 (LYLY…VALF).

This sequence belongs to the complex I subunit 6 family.

It localises to the mitochondrion membrane. It catalyses the reaction a ubiquinone + NADH + 5 H(+)(in) = a ubiquinol + NAD(+) + 4 H(+)(out). Functionally, core subunit of the mitochondrial membrane respiratory chain NADH dehydrogenase (Complex I) that is believed to belong to the minimal assembly required for catalysis. Complex I functions in the transfer of electrons from NADH to the respiratory chain. The immediate electron acceptor for the enzyme is believed to be ubiquinone. This is NADH-ubiquinone oxidoreductase chain 6 (ND6) from Chlamydomonas reinhardtii (Chlamydomonas smithii).